Reading from the N-terminus, the 311-residue chain is Phosphoglycerate mutase 2 (311 aa).

Residues 16–23 (RHGQSELN), 29–30 (CG), R73, 126–129 (ERHY), K137, 153–154 (RR), and 243–244 (GS) each bind substrate. Catalysis depends on H17, which acts as the Tele-phosphohistidine intermediate. Catalysis depends on E126, which acts as the Proton donor/acceptor.

This sequence belongs to the phosphoglycerate mutase family. BPG-dependent PGAM subfamily.

The protein localises to the cytoplasm. The catalysed reaction is (2R)-2-phosphoglycerate = (2R)-3-phosphoglycerate. It participates in carbohydrate degradation; glycolysis; pyruvate from D-glyceraldehyde 3-phosphate: step 3/5. Its function is as follows. Could be non-functional. This is Phosphoglycerate mutase 2 (GPM2) from Saccharomyces cerevisiae (strain ATCC 204508 / S288c) (Baker's yeast).